The following is a 76-amino-acid chain: MKKDIHPDYHSITVQLVDGTTYQTRSTYGSAGDTLQLDIDPSVHPAWTGGKSHMLDAGGQVARFNKRFGGLTLGKK.

This sequence belongs to the bacterial ribosomal protein bL31 family. Type A subfamily. As to quaternary structure, part of the 50S ribosomal subunit.

Functionally, binds the 23S rRNA. The chain is Large ribosomal subunit protein bL31 from Rhizorhabdus wittichii (strain DSM 6014 / CCUG 31198 / JCM 15750 / NBRC 105917 / EY 4224 / RW1) (Sphingomonas wittichii).